Reading from the N-terminus, the 427-residue chain is Histidinol dehydrogenase (427 aa).

Residues Y123, Q185, and N208 each coordinate NAD(+). S231, Q253, and H256 together coordinate substrate. Zn(2+)-binding residues include Q253 and H256. Residues E321 and H322 each act as proton acceptor in the active site. Substrate is bound by residues H322, D355, E409, and H414. Zn(2+) is bound at residue D355. H414 is a Zn(2+) binding site.

It belongs to the histidinol dehydrogenase family. Requires Zn(2+) as cofactor.

The enzyme catalyses L-histidinol + 2 NAD(+) + H2O = L-histidine + 2 NADH + 3 H(+). It functions in the pathway amino-acid biosynthesis; L-histidine biosynthesis; L-histidine from 5-phospho-alpha-D-ribose 1-diphosphate: step 9/9. Catalyzes the sequential NAD-dependent oxidations of L-histidinol to L-histidinaldehyde and then to L-histidine. This is Histidinol dehydrogenase from Oceanobacillus iheyensis (strain DSM 14371 / CIP 107618 / JCM 11309 / KCTC 3954 / HTE831).